The following is a 361-amino-acid chain: tRNA-specific 2-thiouridylase MnmA (361 aa).

ATP is bound by residues 11–18 and Met-37; that span reads GMSGGVDS. Residues 97–99 are interaction with target base in tRNA; the sequence is NPD. Cys-102 functions as the Nucleophile in the catalytic mechanism. Cysteines 102 and 199 form a disulfide. Gly-126 is an ATP binding site. The interval 149–151 is interaction with tRNA; the sequence is KDQ. The active-site Cysteine persulfide intermediate is Cys-199. Residues 311–312 form an interaction with tRNA region; the sequence is RY.

This sequence belongs to the MnmA/TRMU family.

The protein localises to the cytoplasm. It catalyses the reaction S-sulfanyl-L-cysteinyl-[protein] + uridine(34) in tRNA + AH2 + ATP = 2-thiouridine(34) in tRNA + L-cysteinyl-[protein] + A + AMP + diphosphate + H(+). Functionally, catalyzes the 2-thiolation of uridine at the wobble position (U34) of tRNA, leading to the formation of s(2)U34. In Cupriavidus taiwanensis (strain DSM 17343 / BCRC 17206 / CCUG 44338 / CIP 107171 / LMG 19424 / R1) (Ralstonia taiwanensis (strain LMG 19424)), this protein is tRNA-specific 2-thiouridylase MnmA.